A 223-amino-acid polypeptide reads, in one-letter code: MQKQRFCLDTTAITDSDVRRSLGVSNISESAEKIMDIIAQARVQLDISCHIPYNTVYKELVGFLIREECAPETLIKVDTWLVKKTPNRYEIKIPAEIFYEYIKDLRERINKGMRISENAMYETALEAYILSKPDEKDREDVLNEVLSKTVNSFRDKYRNTLRGGTLDSAPDLDVLLLAKELDAAVVANDEGIEKWAQRLGLRFVNARDFPFILQEYLDLWDKK.

This sequence belongs to the HARP family.

It catalyses the reaction Endonucleolytic cleavage of RNA, removing 5'-extranucleotides from tRNA precursor.. RNA-free RNase P that catalyzes the removal of the 5'-leader sequence from pre-tRNA to produce the mature 5'-terminus. The sequence is that of RNA-free ribonuclease P from Methanococcus maripaludis (strain C7 / ATCC BAA-1331).